Reading from the N-terminus, the 145-residue chain is Transmembrane protein 170A (145 aa).

Topologically, residues 1-50 (MIEALIVGEMQDVQIGFVKQILSLNLVPRSNNTTCGNNTSLCDFSEMWYG) are lumenal. Asn-31 and Asn-37 each carry an N-linked (GlcNAc...) asparagine glycan. The helical transmembrane segment at 51 to 71 (VFLWAVVSSLIFHLPAALLAL) threads the bilayer. At 72–81 (ATLRRHKVAR) the chain is on the cytoplasmic side. The chain crosses the membrane as a helical span at residues 82–102 (FFPLGILLMGIIGPLFGGVLT). Topologically, residues 103–117 (SAAIAGVYKAAGKSM) are lumenal. Residues 118–138 (FSLEALVFGVGQSLFIFIISF) form a helical membrane-spanning segment. Residues 139–145 (LRILATL) lie on the Cytoplasmic side of the membrane.

This sequence belongs to the TMEM170 family.

It is found in the endoplasmic reticulum membrane. Its subcellular location is the nucleus envelope. Its function is as follows. May regulate membrane morphogenesis in the endoplasmic reticulum (ER) by promoting ER sheet formation at the expense of ER tubules. This Danio rerio (Zebrafish) protein is Transmembrane protein 170A (tmem170a).